We begin with the raw amino-acid sequence, 495 residues long: Alpha,alpha-trehalose-phosphate synthase [UDP-forming] 56 kDa subunit (495 aa).

Residues Tyr102 and Asp156 each contribute to the D-glucose 6-phosphate site. UDP is bound by residues Arg293 and Lys298. UDP-alpha-D-glucose-binding residues include Arg293 and Lys298. A D-glucose 6-phosphate-binding site is contributed by Arg331. Residues Ile370 and 396–400 (LVSYE) each bind UDP. UDP-alpha-D-glucose is bound by residues Ile370 and 392–400 (DGMNLVSYE).

Belongs to the glycosyltransferase 20 family. As to quaternary structure, the trehalose synthase complex is composed of the two catalytic subunits TPS1 and TPS2 and at least one of the two regulatory subunits TPS3 or TSL1.

The protein localises to the cytoplasm. The enzyme catalyses D-glucose 6-phosphate + UDP-alpha-D-glucose = alpha,alpha-trehalose 6-phosphate + UDP + H(+). The protein operates within carbohydrate biosynthesis. Activated by fructose 6-phosphate. Inorganic phosphate inhibits the synthase activity in the complex, but activates the synthase activity in the free monomeric form. Synthase catalytic subunit of the trehalose synthase complex that catalyzes the production of trehalose from glucose-6-phosphate and UDP-alpha-D-glucose in a two step process. Can function independently of the complex. This chain is Alpha,alpha-trehalose-phosphate synthase [UDP-forming] 56 kDa subunit, found in Saccharomyces cerevisiae (strain ATCC 204508 / S288c) (Baker's yeast).